The following is a 185-amino-acid chain: uncharacterized protein (185 aa).

This is an uncharacterized protein from Archaeoglobus fulgidus (strain ATCC 49558 / DSM 4304 / JCM 9628 / NBRC 100126 / VC-16).